A 605-amino-acid chain; its full sequence is Aspartate--tRNA(Asp/Asn) ligase (605 aa).

An L-aspartate-binding site is contributed by E183. An aspartate region spans residues 207 to 210; the sequence is QLYK. R229 contributes to the L-aspartate binding site. Residues 229 to 231 and Q238 each bind ATP; that span reads RDE. H456 is an L-aspartate binding site. E490 is an ATP binding site. Residue R497 coordinates L-aspartate. 542-545 lines the ATP pocket; sequence GLDR.

It belongs to the class-II aminoacyl-tRNA synthetase family. Type 1 subfamily. In terms of assembly, homodimer.

It localises to the cytoplasm. It catalyses the reaction tRNA(Asx) + L-aspartate + ATP = L-aspartyl-tRNA(Asx) + AMP + diphosphate. Its function is as follows. Aspartyl-tRNA synthetase with relaxed tRNA specificity since it is able to aspartylate not only its cognate tRNA(Asp) but also tRNA(Asn). Reaction proceeds in two steps: L-aspartate is first activated by ATP to form Asp-AMP and then transferred to the acceptor end of tRNA(Asp/Asn). In Heliobacterium modesticaldum (strain ATCC 51547 / Ice1), this protein is Aspartate--tRNA(Asp/Asn) ligase.